A 156-amino-acid chain; its full sequence is Putative thymidylate kinase (156 aa).

Glycine 7 to threonine 14 contributes to the ATP binding site.

The protein belongs to the thymidylate kinase family.

The catalysed reaction is dTMP + ATP = dTDP + ADP. It participates in pyrimidine metabolism; dTTP biosynthesis. Functionally, catalyzes the conversion of dTMP to dTDP. This is Putative thymidylate kinase from Acidianus convivator (ABV).